A 354-amino-acid chain; its full sequence is Elongation factor Ts (354 aa).

The segment at Thr81–Val84 is involved in Mg(2+) ion dislocation from EF-Tu.

The protein belongs to the EF-Ts family.

It is found in the cytoplasm. Its function is as follows. Associates with the EF-Tu.GDP complex and induces the exchange of GDP to GTP. It remains bound to the aminoacyl-tRNA.EF-Tu.GTP complex up to the GTP hydrolysis stage on the ribosome. The chain is Elongation factor Ts from Campylobacter fetus subsp. fetus (strain 82-40).